Reading from the N-terminus, the 235-residue chain is MAEQTHVLFVEDDDVIREATQLALERDGFAVTAMPDGLSGLEAFRANRPDIALLDVMVPGLDGVSLCRRIRDESTVPVIMLSARADSIDVVLGLEAGADDYVTKPFDGAVLVARIRAVLRRFGHASGPNSRPAEDSSAPDGGVLTFGELEIDTEGMEVRRSGQPVALTPTEMRLLLEFSSAPGTVLSRDKLLERVWDYGWGGDTRVVDVHVQRLRTKIGQDRIDTVRGFGYKLKA.

The 114-residue stretch at 6–119 (HVLFVEDDDV…VLVARIRAVL (114 aa)) folds into the Response regulatory domain. Asp55 is subject to 4-aspartylphosphate. The ompR/PhoB-type DNA-binding region spans 141–235 (GGVLTFGELE…VRGFGYKLKA (95 aa)).

In terms of processing, phosphorylated by CseC.

Its subcellular location is the cytoplasm. Member of the two-component regulatory system CseB/CseC involved in the stability of the cell envelope. CseB activates transcription of RNA polymerase sigma-E factor, in response to changes in the cell envelope. This Streptomyces avermitilis (strain ATCC 31267 / DSM 46492 / JCM 5070 / NBRC 14893 / NCIMB 12804 / NRRL 8165 / MA-4680) protein is Transcriptional regulatory protein CseB (cseB).